We begin with the raw amino-acid sequence, 61 residues long: Large ribosomal subunit protein bL32 (61 aa).

Residues 1 to 16 are compositionally biased toward basic residues; that stretch reads MAVPKRKTSPSKRGMR. The tract at residues 1–41 is disordered; sequence MAVPKRKTSPSKRGMRRSADALKASTYVEDKNSGELRRPHH. Residues 28-41 show a composition bias toward basic and acidic residues; it reads VEDKNSGELRRPHH.

The protein belongs to the bacterial ribosomal protein bL32 family.

The sequence is that of Large ribosomal subunit protein bL32 from Rhizobium rhizogenes (strain K84 / ATCC BAA-868) (Agrobacterium radiobacter).